Reading from the N-terminus, the 682-residue chain is Potassium-transporting ATPase ATP-binding subunit (682 aa).

The next 4 membrane-spanning stretches (helical) occupy residues 34-54 (PVMFIVWIGSLLTTCISIAMA), 62-82 (ALFSAAISGWLWITVLFANFA), 219-239 (IALTILLIALTIVFLLATATL), and 254-274 (VLVALLVCLIPTTIGGLLSAI). The 4-aspartylphosphate intermediate role is filled by D307. Residues D344, E348, 377 to 384 (FTAQSRMS), and K395 contribute to the ATP site. D518 and D522 together coordinate Mg(2+). Transmembrane regions (helical) follow at residues 588 to 608 (FAIIPAAFAATYPQLNALNIM), 616 to 636 (AILSAVIFNALIIVFLIPLAL), and 656 to 676 (IYGLGGLLVPFIGIKVIDLLL).

The protein belongs to the cation transport ATPase (P-type) (TC 3.A.3) family. Type IA subfamily. The system is composed of three essential subunits: KdpA, KdpB and KdpC.

Its subcellular location is the cell inner membrane. The catalysed reaction is K(+)(out) + ATP + H2O = K(+)(in) + ADP + phosphate + H(+). Its function is as follows. Part of the high-affinity ATP-driven potassium transport (or Kdp) system, which catalyzes the hydrolysis of ATP coupled with the electrogenic transport of potassium into the cytoplasm. This subunit is responsible for energy coupling to the transport system and for the release of the potassium ions to the cytoplasm. In Escherichia coli (strain K12 / MC4100 / BW2952), this protein is Potassium-transporting ATPase ATP-binding subunit.